The sequence spans 789 residues: Phenylalanine--tRNA ligase beta subunit (789 aa).

The 111-residue stretch at 39 to 149 folds into the tRNA-binding domain; the sequence is ADGLEAFRIA…HEAPVGQSYV (111 aa). One can recognise a B5 domain in the interval 399 to 471; that stretch reads SAVPVISYDP…RIEGLDNVPS (73 aa). Residues D449, D455, and D459 each contribute to the Mg(2+) site. The FDX-ACB domain occupies 696 to 788; sequence SMLQPVFRDF…AAAKKGARLR (93 aa).

This sequence belongs to the phenylalanyl-tRNA synthetase beta subunit family. Type 1 subfamily. In terms of assembly, tetramer of two alpha and two beta subunits. Requires Mg(2+) as cofactor.

Its subcellular location is the cytoplasm. It carries out the reaction tRNA(Phe) + L-phenylalanine + ATP = L-phenylalanyl-tRNA(Phe) + AMP + diphosphate + H(+). In Zymomonas mobilis subsp. mobilis (strain ATCC 31821 / ZM4 / CP4), this protein is Phenylalanine--tRNA ligase beta subunit.